The chain runs to 81 residues: Protein Vpu (81 aa).

At 1–7 (MQPLQIL) the chain is on the extracellular side. The chain crosses the membrane as a helical span at residues 8 to 28 (SIVALVVAAIIAIVVWSIVFI). Topologically, residues 29-81 (LIRKILRQRKIDRLIDRIRERAEDSGNESEGIRKELSALVEMGHDAPGDIDDL) are cytoplasmic. Ser-53 and Ser-57 each carry phosphoserine; by host CK2.

The protein belongs to the HIV-1 VPU protein family. As to quaternary structure, homopentamer. Interacts with host CD4 and BRTC; these interactions induce proteasomal degradation of CD4. Interacts with host BST2; this interaction leads to the degradation of host BST2. Interacts with host FBXW11. Interacts with host AP1M1; this interaction plays a role in the mistrafficking and subsequent degradation of host BST2. Interacts with host RANBP2; this interaction allows Vpu to down-regulate host BLM sumoylation. Phosphorylated by host CK2. This phosphorylation is necessary for interaction with human BTRC and degradation of CD4.

The protein resides in the host membrane. Its activity is regulated as follows. Ion channel activity is inhibited by hexamethylene amiloride in vitro. Enhances virion budding by targeting host CD4 and Tetherin/BST2 to proteasome degradation. Degradation of CD4 prevents any unwanted premature interactions between viral Env and its host receptor CD4 in the endoplasmic reticulum. Degradation of antiretroviral protein Tetherin/BST2 is important for virion budding, as BST2 tethers new viral particles to the host cell membrane. Mechanistically, Vpu bridges either CD4 or BST2 to BTRC, a substrate recognition subunit of the Skp1/Cullin/F-box protein E3 ubiquitin ligase, induces their ubiquitination and subsequent proteasomal degradation. The alteration of the E3 ligase specificity by Vpu seems to promote the degradation of host IKBKB, leading to NF-kappa-B down-regulation and subsequent apoptosis. Acts as a viroporin that forms an oligomeric ion channel in membranes. Modulates the host DNA repair mechanisms to promote degradation of nuclear viral cDNA in cells that are already productively infected in order to suppress immune sensing and proviral hyper-integration (superinfection). Manipulates PML-NBs and modulates SUMOylation of host BLM protein thereby enhancing its DNA-end processing activity toward viral unintegrated linear DNA. Also inhibits RAD52-mediated homologous repair of viral cDNA, preventing the generation of dead-end circular forms of single copies of the long terminal repeat and permitting sustained nucleolytic attack. The chain is Protein Vpu from Homo sapiens (Human).